The following is a 95-amino-acid chain: UPF0223 protein Bsph_1378 (95 aa).

Belongs to the UPF0223 family.

In Lysinibacillus sphaericus (strain C3-41), this protein is UPF0223 protein Bsph_1378.